The chain runs to 153 residues: uncharacterized protein (153 aa).

2 consecutive transmembrane segments (helical) span residues 16–36 and 97–117; these read ILAC…ILEI and ALTT…CIIC.

The protein resides in the membrane. This is an uncharacterized protein from Human herpesvirus 6A (strain Uganda-1102) (HHV-6 variant A).